Here is a 144-residue protein sequence, read N- to C-terminus: D-aminoacyl-tRNA deacylase (144 aa).

A Gly-cisPro motif, important for rejection of L-amino acids motif is present at residues 136 to 137; the sequence is GP.

Belongs to the DTD family. As to quaternary structure, homodimer.

Its subcellular location is the cytoplasm. It catalyses the reaction glycyl-tRNA(Ala) + H2O = tRNA(Ala) + glycine + H(+). The enzyme catalyses a D-aminoacyl-tRNA + H2O = a tRNA + a D-alpha-amino acid + H(+). Functionally, an aminoacyl-tRNA editing enzyme that deacylates mischarged D-aminoacyl-tRNAs. Also deacylates mischarged glycyl-tRNA(Ala), protecting cells against glycine mischarging by AlaRS. Acts via tRNA-based rather than protein-based catalysis; rejects L-amino acids rather than detecting D-amino acids in the active site. By recycling D-aminoacyl-tRNA to D-amino acids and free tRNA molecules, this enzyme counteracts the toxicity associated with the formation of D-aminoacyl-tRNA entities in vivo and helps enforce protein L-homochirality. The sequence is that of D-aminoacyl-tRNA deacylase from Mannheimia succiniciproducens (strain KCTC 0769BP / MBEL55E).